The following is a 702-amino-acid chain: Arylphorin subunit alpha (702 aa).

A signal peptide spans 1-16 (MKTVVILAGLVALALS). Residues Asn75 and Asn214 are each glycosylated (N-linked (GlcNAc...) asparagine).

This sequence belongs to the hemocyanin family. As to quaternary structure, arylphorin is a hexamer of subunits alpha and beta. In terms of tissue distribution, fat body.

Its subcellular location is the secreted. It localises to the extracellular space. Functionally, arylphorin is a larval storage protein (LSP) which may serve as a storage protein used primarily as a source of aromatic amino acids for protein synthesis during metamorphosis. It is a constituent of the sclerotizing system of the cuticle, and serves as a carrier for ecdysteroid hormone. The polypeptide is Arylphorin subunit alpha (Manduca sexta (Tobacco hawkmoth)).